The primary structure comprises 226 residues: Isoprenyl transferase (226 aa).

Aspartate 12 is an active-site residue. Mg(2+) is bound at residue aspartate 12. Residues 13–16 (GNAR), tryptophan 17, lysine 25, histidine 29, and 57–59 (SFE) each bind substrate. Residue asparagine 60 is the Proton acceptor of the active site. Substrate is bound by residues tryptophan 61, arginine 63, arginine 174, and 180-182 (RIS). Glutamate 193 is a Mg(2+) binding site.

Belongs to the UPP synthase family. In terms of assembly, homodimer. Mg(2+) serves as cofactor.

In terms of biological role, catalyzes the condensation of isopentenyl diphosphate (IPP) with allylic pyrophosphates generating different type of terpenoids. In Rickettsia prowazekii (strain Madrid E), this protein is Isoprenyl transferase.